The following is a 243-amino-acid chain: MTLKPLILIPARMGSTRLPEKVLAEISGKPMIVHVAERAKEAALGPTIIATDHDAIAQAVTAYGHEYVMTHTHHQSGSDRIYEALTRIDPEQRYNAILNVQGDLPTVTPNALISVLQLLKNNLTDIATLGAEIIEDNEKNNPNIVKIIGTPIAQNRLRALYFTRATAPYGNGPLYHHIGLYAYRRKALEKFVSLKPSTLEQREKLEQLRALENNMRIDVEIVDTALLGVDTHHDLEKVRKILA.

It belongs to the KdsB family.

It localises to the cytoplasm. The catalysed reaction is 3-deoxy-alpha-D-manno-oct-2-ulosonate + CTP = CMP-3-deoxy-beta-D-manno-octulosonate + diphosphate. It functions in the pathway nucleotide-sugar biosynthesis; CMP-3-deoxy-D-manno-octulosonate biosynthesis; CMP-3-deoxy-D-manno-octulosonate from 3-deoxy-D-manno-octulosonate and CTP: step 1/1. It participates in bacterial outer membrane biogenesis; lipopolysaccharide biosynthesis. Its function is as follows. Activates KDO (a required 8-carbon sugar) for incorporation into bacterial lipopolysaccharide in Gram-negative bacteria. The sequence is that of 3-deoxy-manno-octulosonate cytidylyltransferase from Bartonella bacilliformis (strain ATCC 35685 / KC583 / Herrer 020/F12,63).